The following is a 118-amino-acid chain: MRNRYIQSFQEAQIGKKQVPQFKAGDTLRLGIKIQEGDKTRIQHFEGVCISIRGNGVDRTFTTRKMGANNIGVEKTFPLYSESLDSIEVLRIGRVRRAKLYYLRSRRGKAARIKELRK.

The protein belongs to the bacterial ribosomal protein bL19 family.

Its function is as follows. This protein is located at the 30S-50S ribosomal subunit interface and may play a role in the structure and function of the aminoacyl-tRNA binding site. The protein is Large ribosomal subunit protein bL19 of Helicobacter hepaticus (strain ATCC 51449 / 3B1).